Here is a 511-residue protein sequence, read N- to C-terminus: GMP synthase [glutamine-hydrolyzing] (511 aa).

The Glutamine amidotransferase type-1 domain occupies 5–195 (AILVLDFGSQ…VFKICQAQIN (191 aa)). The active-site Nucleophile is Cys82. Residues His169 and Glu171 contribute to the active site. In terms of domain architecture, GMPS ATP-PPase spans 196–386 (WSLEGNLETI…LGIKKESLYR (191 aa)). 223-229 (SGGTDSL) contributes to the ATP binding site.

In terms of assembly, homodimer.

The enzyme catalyses XMP + L-glutamine + ATP + H2O = GMP + L-glutamate + AMP + diphosphate + 2 H(+). The protein operates within purine metabolism; GMP biosynthesis; GMP from XMP (L-Gln route): step 1/1. Functionally, catalyzes the synthesis of GMP from XMP. The chain is GMP synthase [glutamine-hydrolyzing] (guaA) from Borreliella burgdorferi (strain ATCC 35210 / DSM 4680 / CIP 102532 / B31) (Borrelia burgdorferi).